Reading from the N-terminus, the 225-residue chain is UPF0758 protein Sputw3181_0338 (225 aa).

The region spanning 102–224 (VLTNPDLTRD…IVSFAERGWI (123 aa)) is the MPN domain. 3 residues coordinate Zn(2+): H173, H175, and D186. The short motif at 173–186 (HNHPSGIAEPSQAD) is the JAMM motif element.

It belongs to the UPF0758 family.

The protein is UPF0758 protein Sputw3181_0338 of Shewanella sp. (strain W3-18-1).